The sequence spans 121 residues: Flagellar hook-basal body complex protein FliE (121 aa).

It belongs to the FliE family.

It is found in the bacterial flagellum basal body. The sequence is that of Flagellar hook-basal body complex protein FliE from Treponema denticola (strain ATCC 35405 / DSM 14222 / CIP 103919 / JCM 8153 / KCTC 15104).